The chain runs to 823 residues: Protein Shroom1 (823 aa).

M1 carries the post-translational modification N-acetylmethionine. 3 disordered regions span residues M1–L55, P72–Q110, and A124–Q159. Polar residues-rich tracts occupy residues R28 to P50 and P72 to P85. A phosphoserine mark is found at S103, S133, S137, S166, S190, and S224. The 89-residue stretch at L145–G233 folds into the ASD1 domain. Residues T181–R200 form a disordered region. Disordered stretches follow at residues S270–K303 and Q349–D375. T383 carries the post-translational modification Phosphothreonine. S385 carries the post-translational modification Phosphoserine. 2 disordered regions span residues L420 to G503 and E566 to A620. Polar residues-rich tracts occupy residues R444–S468, S489–G503, and Q586–A620. Residues E517–S796 form the ASD2 domain.

The protein belongs to the shroom family. In terms of assembly, interacts with F-actin.

Its subcellular location is the cytoplasm. The protein resides in the cytoskeleton. May be involved in the assembly of microtubule arrays during cell elongation. The polypeptide is Protein Shroom1 (Shroom1) (Mus musculus (Mouse)).